Consider the following 106-residue polypeptide: Putative double-stranded DNA mimic protein VIBHAR_02752 (106 aa).

This sequence belongs to the putative dsDNA mimic protein family.

May act as a double-stranded DNA (dsDNA) mimic. Probably regulates the activity of a dsDNA-binding protein. This chain is Putative double-stranded DNA mimic protein VIBHAR_02752, found in Vibrio campbellii (strain ATCC BAA-1116).